The sequence spans 467 residues: Ribulose bisphosphate carboxylase large chain (467 aa).

At Lys6 the chain carries N6,N6,N6-trimethyllysine. Substrate-binding residues include Asn115 and Thr165. Lys167 acts as the Proton acceptor in catalysis. Position 169 (Lys169) interacts with substrate. Mg(2+) contacts are provided by Lys193, Asp195, and Glu196. The residue at position 193 (Lys193) is an N6-carboxylysine. His286 serves as the catalytic Proton acceptor. Residues Arg287, His319, and Ser371 each coordinate substrate.

The protein belongs to the RuBisCO large chain family. Type I subfamily. As to quaternary structure, heterohexadecamer of 8 large chains and 8 small chains; disulfide-linked. The disulfide link is formed within the large subunit homodimers. It depends on Mg(2+) as a cofactor. The disulfide bond which can form in the large chain dimeric partners within the hexadecamer appears to be associated with oxidative stress and protein turnover.

The protein localises to the plastid. Its subcellular location is the chloroplast. The enzyme catalyses 2 (2R)-3-phosphoglycerate + 2 H(+) = D-ribulose 1,5-bisphosphate + CO2 + H2O. It catalyses the reaction D-ribulose 1,5-bisphosphate + O2 = 2-phosphoglycolate + (2R)-3-phosphoglycerate + 2 H(+). RuBisCO catalyzes two reactions: the carboxylation of D-ribulose 1,5-bisphosphate, the primary event in carbon dioxide fixation, as well as the oxidative fragmentation of the pentose substrate in the photorespiration process. Both reactions occur simultaneously and in competition at the same active site. The chain is Ribulose bisphosphate carboxylase large chain from Cedrus atlantica (Atlas cedar).